A 110-amino-acid polypeptide reads, in one-letter code: Ig lambda-1 chain V region S178 (110 aa).

The Ig-like domain maps to 1 to 106; it reads QAVVTQESAL…RWVFGGGTKL (106 aa).

The sequence is that of Ig lambda-1 chain V region S178 from Mus musculus (Mouse).